A 205-amino-acid polypeptide reads, in one-letter code: Urease accessory protein UreE (205 aa).

The disordered stretch occupies residues 171 to 205 (AHEAHPHAHSHAGGHGHVHSGHGHGGKHGEHDAES). Basic residues predominate over residues 177–196 (HAHSHAGGHGHVHSGHGHGG).

Belongs to the UreE family.

It is found in the cytoplasm. Involved in urease metallocenter assembly. Binds nickel. Probably functions as a nickel donor during metallocenter assembly. This chain is Urease accessory protein UreE, found in Bordetella parapertussis (strain 12822 / ATCC BAA-587 / NCTC 13253).